A 410-amino-acid chain; its full sequence is Protein king tubby 2 (410 aa).

Polar residues predominate over residues 48 to 72; that stretch reads SPNNPDQILTSTGNASITTTPTSPY. Disordered stretches follow at residues 48 to 109 and 121 to 159; these read SPNN…STRH and ISPALMNNNGGSHHDSSSGKSVEHSSPQASGHNDTEGDV. The segment covering 132–143 has biased composition (basic and acidic residues); it reads SHHDSSSGKSVE.

This sequence belongs to the TUB family.

The protein localises to the cytoplasm. It is found in the nucleus. The protein is Protein king tubby 2 (king-tubby2) of Aedes aegypti (Yellowfever mosquito).